A 118-amino-acid chain; its full sequence is uncharacterized protein (118 aa).

This is an uncharacterized protein from Haemophilus influenzae (strain ATCC 51907 / DSM 11121 / KW20 / Rd).